We begin with the raw amino-acid sequence, 154 residues long: Transcription antitermination protein NusB (154 aa).

This sequence belongs to the NusB family.

Functionally, involved in transcription antitermination. Required for transcription of ribosomal RNA (rRNA) genes. Binds specifically to the boxA antiterminator sequence of the ribosomal RNA (rrn) operons. This is Transcription antitermination protein NusB from Rickettsia typhi (strain ATCC VR-144 / Wilmington).